The sequence spans 435 residues: Serine carboxypeptidase-like 16 (435 aa).

The signal sequence occupies residues 1–23; it reads MGSWIPKLLLLQLVLLLTKHADS. 3 disulfides stabilise this stretch: Cys82–Cys325, Cys246–Cys260, and Cys284–Cys291. N-linked (GlcNAc...) asparagine glycosylation is present at Asn103. The active site involves Ser178. Asn305 carries an N-linked (GlcNAc...) asparagine glycan. The active site involves Asp360. N-linked (GlcNAc...) asparagine glycosylation is present at Asn376. His413 is an active-site residue.

It belongs to the peptidase S10 family. In terms of tissue distribution, expressed in seedlings, roots and leaves.

It is found in the secreted. Functionally, probable carboxypeptidase. The chain is Serine carboxypeptidase-like 16 (SCPL16) from Arabidopsis thaliana (Mouse-ear cress).